Consider the following 607-residue polypeptide: Sulfite reductase [NADPH] flavoprotein alpha-component (607 aa).

The region spanning 66-204 (VTILYGSQTG…AAGQWHADVL (139 aa)) is the Flavodoxin-like domain. Residues 72–77 (SQTGNG), 119–122 (STHG), and 155–164 (LGDSSYEFFC) contribute to the FMN site. One can recognise an FAD-binding FR-type domain in the interval 239–456 (QNPYRAEVLV…VEPNKHFRLP (218 aa)). Residues Thr327, Leu361, 395–398 (RLYS), 413–415 (TVA), and 428–431 (GGAS) contribute to the FAD site. Residues 527–528 (SR), 533–537 (KIYVQ), and Asp569 each bind NADP(+). Tyr607 contacts FAD.

The protein belongs to the NADPH-dependent sulphite reductase flavoprotein subunit CysJ family. This sequence in the N-terminal section; belongs to the flavodoxin family. In the C-terminal section; belongs to the flavoprotein pyridine nucleotide cytochrome reductase family. In terms of assembly, alpha(8)-beta(8). The alpha component is a flavoprotein, the beta component is a hemoprotein. The cofactor is FAD. It depends on FMN as a cofactor.

It catalyses the reaction hydrogen sulfide + 3 NADP(+) + 3 H2O = sulfite + 3 NADPH + 4 H(+). It functions in the pathway sulfur metabolism; hydrogen sulfide biosynthesis; hydrogen sulfide from sulfite (NADPH route): step 1/1. Its function is as follows. Component of the sulfite reductase complex that catalyzes the 6-electron reduction of sulfite to sulfide. This is one of several activities required for the biosynthesis of L-cysteine from sulfate. The flavoprotein component catalyzes the electron flow from NADPH -&gt; FAD -&gt; FMN to the hemoprotein component. In Shewanella oneidensis (strain ATCC 700550 / JCM 31522 / CIP 106686 / LMG 19005 / NCIMB 14063 / MR-1), this protein is Sulfite reductase [NADPH] flavoprotein alpha-component.